A 500-amino-acid polypeptide reads, in one-letter code: Cytochrome P450 2D27 (500 aa).

Residue C446 coordinates heme.

The protein belongs to the cytochrome P450 family. Heme is required as a cofactor. As to expression, expressed in liver, but not in kidney, small intestine, and brain.

Its subcellular location is the endoplasmic reticulum membrane. It localises to the microsome membrane. In terms of biological role, has bufuralol 1'-hydroxylase and debrisoquine 4-hydroxylase activities. The chain is Cytochrome P450 2D27 (CYP2D27) from Mesocricetus auratus (Golden hamster).